A 402-amino-acid polypeptide reads, in one-letter code: Phosphoglycerate kinase (402 aa).

Substrate contacts are provided by residues 24–26, R40, 63–66, R122, and R155; these read DFN and HFGR. ATP is bound by residues K206, G297, E328, and 357-360; that span reads GGDS.

Belongs to the phosphoglycerate kinase family. Monomer.

The protein resides in the cytoplasm. It catalyses the reaction (2R)-3-phosphoglycerate + ATP = (2R)-3-phospho-glyceroyl phosphate + ADP. It functions in the pathway carbohydrate degradation; glycolysis; pyruvate from D-glyceraldehyde 3-phosphate: step 2/5. The protein is Phosphoglycerate kinase of Prochlorococcus marinus (strain SARG / CCMP1375 / SS120).